The sequence spans 104 residues: Urease subunit beta (104 aa).

It belongs to the urease beta subunit family. Heterotrimer of UreA (gamma), UreB (beta) and UreC (alpha) subunits. Three heterotrimers associate to form the active enzyme.

It is found in the cytoplasm. It carries out the reaction urea + 2 H2O + H(+) = hydrogencarbonate + 2 NH4(+). It functions in the pathway nitrogen metabolism; urea degradation; CO(2) and NH(3) from urea (urease route): step 1/1. The chain is Urease subunit beta from Rhodopseudomonas palustris (strain BisB18).